The sequence spans 105 residues: NADH-quinone oxidoreductase subunit K (105 aa).

3 helical membrane passes run 9 to 29, 34 to 54, and 65 to 85; these read PNYY…GVLV, IVLF…LVTF, and IMAF…LAII.

It belongs to the complex I subunit 4L family. NDH-1 is composed of 14 different subunits. Subunits NuoA, H, J, K, L, M, N constitute the membrane sector of the complex.

Its subcellular location is the cell membrane. The enzyme catalyses a quinone + NADH + 5 H(+)(in) = a quinol + NAD(+) + 4 H(+)(out). Functionally, NDH-1 shuttles electrons from NADH, via FMN and iron-sulfur (Fe-S) centers, to quinones in the respiratory chain. The immediate electron acceptor for the enzyme in this species is believed to be a menaquinone. Couples the redox reaction to proton translocation (for every two electrons transferred, four hydrogen ions are translocated across the cytoplasmic membrane), and thus conserves the redox energy in a proton gradient. The polypeptide is NADH-quinone oxidoreductase subunit K (Salinispora tropica (strain ATCC BAA-916 / DSM 44818 / JCM 13857 / NBRC 105044 / CNB-440)).